Reading from the N-terminus, the 451-residue chain is uncharacterized protein (451 aa).

A run of 11 helical transmembrane segments spans residues 13-33 (IGFV…WKFP), 41-61 (GGAF…PLLV), 97-117 (ACFL…LYIV), 142-162 (NPVQ…LVVA), 174-194 (AVMM…SLTL), 217-237 (ILFA…VMVT), 255-275 (IVLM…PAVF), 299-319 (LPFG…AALT), 345-365 (WTSG…YGVL), 381-401 (FTVS…FIPL), and 429-449 (LLRF…IGIL).

The protein belongs to the sodium:neurotransmitter symporter (SNF) (TC 2.A.22) family.

The protein localises to the cell membrane. Functionally, putative sodium-dependent transporter. This is an uncharacterized protein from Bacillus subtilis (strain 168).